The following is a 284-amino-acid chain: Nucleotide-binding protein Sbal_3671 (284 aa).

8–15 (GRSGSGKS) contacts ATP. 56–59 (DVRN) contacts GTP.

The protein belongs to the RapZ-like family.

Displays ATPase and GTPase activities. This is Nucleotide-binding protein Sbal_3671 from Shewanella baltica (strain OS155 / ATCC BAA-1091).